A 257-amino-acid polypeptide reads, in one-letter code: MSVYSFSDVSLVAKALGAFVKEKSEASIKRHGVFTLALSGGSLPKVLAEGLAQQRGIEFSKWEVFFADERIVPLDDENSNYALCKKLIFDKFEGFDPKKIHTINPELLKENPIDPQNVADEYEKQLVHVFANSSTVKVPVFDLLLLGCGPDGHTCSLFPDHEVLQEDVAWVAPVTDSPKPPKDRITLTLPVVTHAQAIAFVTTGAGKKDILPIVIEDFTSKLPSALITRNNLTRTSWFVDDEASANLERSSLKVFPQ.

The protein belongs to the glucosamine/galactosamine-6-phosphate isomerase family. 6-phosphogluconolactonase subfamily.

It catalyses the reaction 6-phospho-D-glucono-1,5-lactone + H2O = 6-phospho-D-gluconate + H(+). The protein operates within carbohydrate degradation; pentose phosphate pathway; D-ribulose 5-phosphate from D-glucose 6-phosphate (oxidative stage): step 2/3. Functionally, hydrolysis of 6-phosphogluconolactone to 6-phosphogluconate. The polypeptide is Probable 6-phosphogluconolactonase (Schizosaccharomyces pombe (strain 972 / ATCC 24843) (Fission yeast)).